A 434-amino-acid polypeptide reads, in one-letter code: Chaperone SurA (434 aa).

Residues 1 to 29 (MKTLRLNFRSAILKALGALLLLQGCLAHA) form the signal peptide. 2 PpiC domains span residues 180 to 281 (AEEY…AMLE) and 290 to 389 (VEQS…QVQD).

The protein resides in the periplasm. The enzyme catalyses [protein]-peptidylproline (omega=180) = [protein]-peptidylproline (omega=0). Functionally, chaperone involved in the correct folding and assembly of outer membrane proteins. Recognizes specific patterns of aromatic residues and the orientation of their side chains, which are found more frequently in integral outer membrane proteins. May act in both early periplasmic and late outer membrane-associated steps of protein maturation. This chain is Chaperone SurA, found in Hahella chejuensis (strain KCTC 2396).